The primary structure comprises 301 residues: tRNA-cytidine(32) 2-sulfurtransferase (301 aa).

The PP-loop motif motif lies at 55 to 60; sequence SGGKDS. The [4Fe-4S] cluster site is built by Cys-130, Cys-133, and Cys-221.

This sequence belongs to the TtcA family. Homodimer. Mg(2+) serves as cofactor. It depends on [4Fe-4S] cluster as a cofactor.

The protein resides in the cytoplasm. It catalyses the reaction cytidine(32) in tRNA + S-sulfanyl-L-cysteinyl-[cysteine desulfurase] + AH2 + ATP = 2-thiocytidine(32) in tRNA + L-cysteinyl-[cysteine desulfurase] + A + AMP + diphosphate + H(+). It functions in the pathway tRNA modification. In terms of biological role, catalyzes the ATP-dependent 2-thiolation of cytidine in position 32 of tRNA, to form 2-thiocytidine (s(2)C32). The sulfur atoms are provided by the cysteine/cysteine desulfurase (IscS) system. This chain is tRNA-cytidine(32) 2-sulfurtransferase, found in Acinetobacter baylyi (strain ATCC 33305 / BD413 / ADP1).